Consider the following 100-residue polypeptide: UPF0213 protein YhbQ (100 aa).

The 76-residue stretch at 2–77 folds into the GIY-YIG domain; the sequence is TPWFLYLIRT…KQLTKRQKER (76 aa).

This sequence belongs to the UPF0213 family.

This chain is UPF0213 protein YhbQ, found in Escherichia coli O1:K1 / APEC.